We begin with the raw amino-acid sequence, 272 residues long: Orotidine 5'-phosphate decarboxylase (272 aa).

K95 (proton donor) is an active-site residue.

The protein belongs to the OMP decarboxylase family. Type 2 subfamily.

The catalysed reaction is orotidine 5'-phosphate + H(+) = UMP + CO2. Its pathway is pyrimidine metabolism; UMP biosynthesis via de novo pathway; UMP from orotate: step 2/2. The sequence is that of Orotidine 5'-phosphate decarboxylase from Bordetella petrii (strain ATCC BAA-461 / DSM 12804 / CCUG 43448).